The following is a 95-amino-acid chain: Large ribosomal subunit protein uL23 (95 aa).

This sequence belongs to the universal ribosomal protein uL23 family. As to quaternary structure, part of the 50S ribosomal subunit. Contacts protein L29, and trigger factor when it is bound to the ribosome.

In terms of biological role, one of the early assembly proteins it binds 23S rRNA. One of the proteins that surrounds the polypeptide exit tunnel on the outside of the ribosome. Forms the main docking site for trigger factor binding to the ribosome. The chain is Large ribosomal subunit protein uL23 from Desulforapulum autotrophicum (strain ATCC 43914 / DSM 3382 / VKM B-1955 / HRM2) (Desulfobacterium autotrophicum).